Consider the following 241-residue polypeptide: UDP-2,3-diacylglucosamine hydrolase (241 aa).

The Mn(2+) site is built by Asp8, His10, Asp41, Asn79, and His114. Substrate is bound at residue Asn79–Arg80. 4 residues coordinate substrate: Asp122, Lys164, Lys167, and His195. Positions 195 and 197 each coordinate Mn(2+).

This sequence belongs to the LpxH family. Mn(2+) serves as cofactor.

Its subcellular location is the cell inner membrane. The enzyme catalyses UDP-2-N,3-O-bis[(3R)-3-hydroxytetradecanoyl]-alpha-D-glucosamine + H2O = 2-N,3-O-bis[(3R)-3-hydroxytetradecanoyl]-alpha-D-glucosaminyl 1-phosphate + UMP + 2 H(+). Its pathway is glycolipid biosynthesis; lipid IV(A) biosynthesis; lipid IV(A) from (3R)-3-hydroxytetradecanoyl-[acyl-carrier-protein] and UDP-N-acetyl-alpha-D-glucosamine: step 4/6. Its function is as follows. Hydrolyzes the pyrophosphate bond of UDP-2,3-diacylglucosamine to yield 2,3-diacylglucosamine 1-phosphate (lipid X) and UMP by catalyzing the attack of water at the alpha-P atom. Involved in the biosynthesis of lipid A, a phosphorylated glycolipid that anchors the lipopolysaccharide to the outer membrane of the cell. The sequence is that of UDP-2,3-diacylglucosamine hydrolase from Aliivibrio fischeri (strain MJ11) (Vibrio fischeri).